We begin with the raw amino-acid sequence, 421 residues long: CinA-like protein (421 aa).

Belongs to the CinA family.

The chain is CinA-like protein from Mycobacterium sp. (strain MCS).